We begin with the raw amino-acid sequence, 513 residues long: Xylose import ATP-binding protein XylG (513 aa).

2 consecutive ABC transporter domains span residues L5–E242 and L259–E505. G37 to S44 lines the ATP pocket.

Belongs to the ABC transporter superfamily. Xylose importer (TC 3.A.1.2.4) family. In terms of assembly, the complex is composed of two ATP-binding proteins (XylG), two transmembrane proteins (XylH) and a solute-binding protein (XylF).

It localises to the cell inner membrane. The enzyme catalyses D-xylose(out) + ATP + H2O = D-xylose(in) + ADP + phosphate + H(+). Its function is as follows. Part of the ABC transporter complex XylFGH involved in xylose import. Responsible for energy coupling to the transport system. This chain is Xylose import ATP-binding protein XylG, found in Shigella boydii serotype 4 (strain Sb227).